Here is a 132-residue protein sequence, read N- to C-terminus: Fatty acid-binding protein 2 (132 aa).

Serine 2 carries the post-translational modification N-acetylserine. Hexadecanoate is bound by residues glutamine 40 and 128-130 (RYY).

This sequence belongs to the calycin superfamily. Fatty-acid binding protein (FABP) family. Monomer. In terms of tissue distribution, midgut.

It is found in the cytoplasm. In terms of biological role, binds fatty acids in a 1:1 molar ratio. This Manduca sexta (Tobacco hawkmoth) protein is Fatty acid-binding protein 2 (MFB2).